A 369-amino-acid chain; its full sequence is 3-dehydroquinate synthase (369 aa).

NAD(+)-binding positions include 75-80, 109-113, 133-134, lysine 146, lysine 155, and 173-176; these read DGEEHK, GVIGD, TT, and TLKT. Glutamate 188, histidine 251, and histidine 268 together coordinate Zn(2+).

It belongs to the sugar phosphate cyclases superfamily. Dehydroquinate synthase family. Co(2+) serves as cofactor. The cofactor is Zn(2+). It depends on NAD(+) as a cofactor.

It localises to the cytoplasm. The enzyme catalyses 7-phospho-2-dehydro-3-deoxy-D-arabino-heptonate = 3-dehydroquinate + phosphate. Its pathway is metabolic intermediate biosynthesis; chorismate biosynthesis; chorismate from D-erythrose 4-phosphate and phosphoenolpyruvate: step 2/7. Catalyzes the conversion of 3-deoxy-D-arabino-heptulosonate 7-phosphate (DAHP) to dehydroquinate (DHQ). In Legionella pneumophila (strain Paris), this protein is 3-dehydroquinate synthase.